A 291-amino-acid chain; its full sequence is Probable 2-(5''-triphosphoribosyl)-3'-dephosphocoenzyme-A synthase (291 aa).

It belongs to the CitG/MdcB family.

It carries out the reaction 3'-dephospho-CoA + ATP = 2'-(5''-triphospho-alpha-D-ribosyl)-3'-dephospho-CoA + adenine. In terms of biological role, involved in the formation of 2-(5''-phosphoribosyl)-3'-dephosphocoenzyme-A, the prosthetic group of the acyl-carrier protein of the malonate decarboxylase. In Pseudomonas fluorescens (strain ATCC BAA-477 / NRRL B-23932 / Pf-5), this protein is Probable 2-(5''-triphosphoribosyl)-3'-dephosphocoenzyme-A synthase.